Consider the following 486-residue polypeptide: Membrane-bound lytic murein transglycosylase F (486 aa).

The N-terminal stretch at 1-29 (MFSPTALRPRYAKWLIATGLFLMLSGCVD) is a signal peptide. Residues 30–267 (KPNTLERVKE…RLKDRYYGHV (238 aa)) are non-LT domain. Residues 268-486 (DVLGYMGATT…SKPAQEPAPL (219 aa)) form an LT domain region. The active site involves Glu314.

In the N-terminal section; belongs to the bacterial solute-binding protein 3 family. The protein in the C-terminal section; belongs to the transglycosylase Slt family.

It localises to the cell outer membrane. The catalysed reaction is Exolytic cleavage of the (1-&gt;4)-beta-glycosidic linkage between N-acetylmuramic acid (MurNAc) and N-acetylglucosamine (GlcNAc) residues in peptidoglycan, from either the reducing or the non-reducing ends of the peptidoglycan chains, with concomitant formation of a 1,6-anhydrobond in the MurNAc residue.. Functionally, murein-degrading enzyme that degrades murein glycan strands and insoluble, high-molecular weight murein sacculi, with the concomitant formation of a 1,6-anhydromuramoyl product. Lytic transglycosylases (LTs) play an integral role in the metabolism of the peptidoglycan (PG) sacculus. Their lytic action creates space within the PG sacculus to allow for its expansion as well as for the insertion of various structures such as secretion systems and flagella. In Pseudomonas fluorescens (strain Pf0-1), this protein is Membrane-bound lytic murein transglycosylase F.